Consider the following 192-residue polypeptide: Hydrophobin-like protein rodD (192 aa).

3 disulfide bridges follow: Cys-45/Cys-106, Cys-50/Cys-99, and Cys-107/Cys-112.

The protein belongs to the fungal hydrophobin family. As to quaternary structure, self-assembles to form functional amyloid fibrils called rodlets. Self-assembly into fibrillar rodlets occurs spontaneously at hydrophobic:hydrophilic interfaces and the rodlets further associate laterally to form amphipathic monolayers.

Its function is as follows. Aerial growth, conidiation, and dispersal of filamentous fungi in the environment rely upon a capability of their secreting small amphipathic proteins called hydrophobins (HPBs) with low sequence identity. Class I can self-assemble into an outermost layer of rodlet bundles on aerial cell surfaces, conferring cellular hydrophobicity that supports fungal growth, development and dispersal; whereas Class II form highly ordered films at water-air interfaces through intermolecular interactions but contribute nothing to the rodlet structure. RodD is a an hydrophobin-like protein that, unlike rodA, is not required for rodlet formation. The chain is Hydrophobin-like protein rodD from Aspergillus fumigatus (strain ATCC MYA-4609 / CBS 101355 / FGSC A1100 / Af293) (Neosartorya fumigata).